Consider the following 179-residue polypeptide: Ribulose bisphosphate carboxylase small subunit, chloroplastic 1/4 (179 aa).

Residues 1 to 58 (MAASSTMLSSVATAACAAPAQASMVAPFVGLKSTSAFPVTQKPATGLSTLPSNGGRVQ) constitute a chloroplast transit peptide.

Belongs to the RuBisCO small chain family. In terms of assembly, heterohexadecamer of 8 large and 8 small subunits.

It is found in the plastid. Its subcellular location is the chloroplast. In terms of biological role, ruBisCO catalyzes two reactions: the carboxylation of D-ribulose 1,5-bisphosphate, the primary event in carbon dioxide fixation, as well as the oxidative fragmentation of the pentose substrate. Both reactions occur simultaneously and in competition at the same active site. Although the small subunit is not catalytic it is essential for maximal activity. The polypeptide is Ribulose bisphosphate carboxylase small subunit, chloroplastic 1/4 (RBCS1) (Fritillaria agrestis (Stinkbells)).